The following is a 230-amino-acid chain: 2,3-bisphosphoglycerate-dependent phosphoglycerate mutase (230 aa).

Substrate is bound by residues 10–17, 23–24, Arg62, 89–92, Lys100, 116–117, and 185–186; these read RHGQSKWN, TG, ERHY, RR, and GN. His11 functions as the Tele-phosphohistidine intermediate in the catalytic mechanism. The active-site Proton donor/acceptor is the Glu89.

This sequence belongs to the phosphoglycerate mutase family. BPG-dependent PGAM subfamily. In terms of assembly, homodimer.

It catalyses the reaction (2R)-2-phosphoglycerate = (2R)-3-phosphoglycerate. It participates in carbohydrate degradation; glycolysis; pyruvate from D-glyceraldehyde 3-phosphate: step 3/5. Catalyzes the interconversion of 2-phosphoglycerate and 3-phosphoglycerate. The polypeptide is 2,3-bisphosphoglycerate-dependent phosphoglycerate mutase (Buchnera aphidicola subsp. Schizaphis graminum (strain Sg)).